We begin with the raw amino-acid sequence, 148 residues long: uncharacterized protein (148 aa).

The span at 1–17 (MEGLQRSTISFRRQGSS) shows a compositional bias: polar residues. The tract at residues 1 to 148 (MEGLQRSTIS…SRRRIVTKKR (148 aa)) is disordered. Composition is skewed to basic and acidic residues over residues 36–47 (EQKDESQRDEQP) and 58–67 (KPIDEKDKLR). 2 positions are modified to phosphoserine: Ser-100 and Ser-107. Residues 128–148 (VNPRKRPPKRRSRRRIVTKKR) are compositionally biased toward basic residues.

This is an uncharacterized protein from Arabidopsis thaliana (Mouse-ear cress).